A 125-amino-acid polypeptide reads, in one-letter code: MPTINQLVRQGRTVEVVKSKSPAMENCPQRRGVCTRVYTTTPKKPNSALRKVAKVRLTNGFEVISYIGGEGHNLQEHSVVLVRGGRVKDLPGVRYHIVRGSLDLQGVKDRKQSRSKYGAKKPKAK.

Residue D89 is modified to 3-methylthioaspartic acid. A disordered region spans residues 105-125 (QGVKDRKQSRSKYGAKKPKAK). Residues 113-125 (SRSKYGAKKPKAK) are compositionally biased toward basic residues.

It belongs to the universal ribosomal protein uS12 family. As to quaternary structure, part of the 30S ribosomal subunit. Contacts proteins S8 and S17. May interact with IF1 in the 30S initiation complex.

Functionally, with S4 and S5 plays an important role in translational accuracy. Its function is as follows. Interacts with and stabilizes bases of the 16S rRNA that are involved in tRNA selection in the A site and with the mRNA backbone. Located at the interface of the 30S and 50S subunits, it traverses the body of the 30S subunit contacting proteins on the other side and probably holding the rRNA structure together. The combined cluster of proteins S8, S12 and S17 appears to hold together the shoulder and platform of the 30S subunit. This is Small ribosomal subunit protein uS12 from Delftia acidovorans (strain DSM 14801 / SPH-1).